Here is a 1199-residue protein sequence, read N- to C-terminus: MAGHLVNYGKHRTRRSYARIKEVLDLPNLIEIQTNSYQWFLDEGLKEMFDDIMPIDDFQGKLSLEFVGYQLLEPKYTVEEARQHDANYSAPLHVTLRLTNHETGEIKSQDVFFGDFPLMTKQGTFIINGAERVIVSQLVRSPGVYFHSETDKNSRVTYGTTVIPNRGAWLEYETDAKDIAYVRIDRTRKIPLTELVRALGFGSDQDIINMFGDNDSLMLTLEKDVHKNTDDSRTDEALKDIYERLRPGEPKTADSSRSLLYARFFDPKRYDLASVGRYKVNKKLSLKTRLLNQVLAETLADPDTGEVIAQKGTKVDRQVMDKLAPYLDRDDFKTITYQPSDQGVVTDPIELQSIKVYSQVTPDKEINLIGNGHIGKKVKHIVPADVLASMNYFLNLQEGLGSIDDIDHLGNRRIRSVGELLQNQFRIGLSRMERVVRERMSIQDTATVTPQQLINIRPVVASIKEFFGSSQLSQFMDQTNPLGELTHKRRLSALGPGGLTRDRAGYEVRDVHYTHYGRMCPIETPEGPNIGLINSLASYAVVNPYGFIETPYRRVSWDTHKVTDKIDYLTADEEDNYIVAQANSPLNDDGSFVDETVLARHKDNNIEISPDKVDYMDVSPKQVVAVATACIPFLENDDSNRALMGANMQRQAVPLVNPHAPLVGTGMEYKAAHDSGTAVLANNAGTVEYVDAKQIRVRREDGALDAYNLMKFKRSNAGKNYNQRPIVTIGDHVDVDEIIADGPAMQNGELALGQNPIIAFMTWNMYNYEDAIVLSERLVKDDVYTSIHIEEYESEARDTKLGPEEVTREIPNVGEEALKDLDEFGVVRVGAEVRDGDILVGKVTPKGVTELSAEERLLHAIFGEKAREVRDTSLRVPHGGGGIIQDVKIFTREAGDELSPGVNMMVRVYITQKRKIQVGDKMAGRHGNKGTVSVVVPEEDMPYLPDGTPVDICLSPMGVPSRMNIGQVLELHLGMAARNLGIHVATPVFDGANDKDLWATVKEAGMASDGKSVLYDGRTGEPFENRVSVGIMYYMKLSHMVDDKIHARSIGPYSLVTQQPLGGKAQFGGQRFGEMEVWALEAYGAAYTLQEILTYKSDDVVGRVKTYEAIVKGEPIPKPGVPESFRVLVKELQALGLDMKVLGADKKEIELRDMDDDEDDIVSVDALAKFAAQQEEKKAHEAAAQATDGKSANSTDDKK.

The interval 1175-1199 (EEKKAHEAAAQATDGKSANSTDDKK) is disordered. The segment covering 1188 to 1199 (DGKSANSTDDKK) has biased composition (polar residues).

This sequence belongs to the RNA polymerase beta chain family. As to quaternary structure, the RNAP catalytic core consists of 2 alpha, 1 beta, 1 beta' and 1 omega subunit. When a sigma factor is associated with the core the holoenzyme is formed, which can initiate transcription.

The enzyme catalyses RNA(n) + a ribonucleoside 5'-triphosphate = RNA(n+1) + diphosphate. Functionally, DNA-dependent RNA polymerase catalyzes the transcription of DNA into RNA using the four ribonucleoside triphosphates as substrates. In Lacticaseibacillus paracasei (strain ATCC 334 / BCRC 17002 / CCUG 31169 / CIP 107868 / KCTC 3260 / NRRL B-441) (Lactobacillus paracasei), this protein is DNA-directed RNA polymerase subunit beta.